The sequence spans 188 residues: Probable chorismate pyruvate-lyase (188 aa).

Substrate-binding residues include Arg-77, Leu-115, and Glu-174.

It belongs to the UbiC family.

It localises to the cytoplasm. The enzyme catalyses chorismate = 4-hydroxybenzoate + pyruvate. Its pathway is cofactor biosynthesis; ubiquinone biosynthesis. In terms of biological role, removes the pyruvyl group from chorismate, with concomitant aromatization of the ring, to provide 4-hydroxybenzoate (4HB) for the ubiquinone pathway. The chain is Probable chorismate pyruvate-lyase from Shewanella loihica (strain ATCC BAA-1088 / PV-4).